We begin with the raw amino-acid sequence, 318 residues long: MLIDHYIMDFMSITPDRLSGASLHLIKAGGKRLRPLITLLTARMLGGLEAEARAIPLAASIETAHTFSLIHDDIMDRDEVRRGVPTTHVVYGDDWAILAGDTLHAAAFKMIADSREWGMSHEQAYRAFKVLSEAAIQISRGQAYDMLFEETWDVDVADYLNMVRLKTGALIEAAARIGAVAAGAGSEIEKMMGEVGMNAGIAFQIRDDILGVIGDPKVTGKPVYNDLRRGKKTLLVIYAVKKAGRREIVDLIGPKASEDDLKRAASIIVDSGALDYAESRARFYVERARDILSRVPAVDAESKELLNLLLDYIVERVK.

Isopentenyl diphosphate contacts are provided by Lys-31, Arg-34, and His-65. Mg(2+) contacts are provided by Asp-72 and Asp-76. Arg-81 serves as a coordination point for an all-trans-polyprenyl diphosphate. Arg-82 contacts isopentenyl diphosphate. 3 residues coordinate an all-trans-polyprenyl diphosphate: Lys-166, Thr-167, and Gln-204.

Belongs to the FPP/GGPP synthase family. Homodimer. It depends on Mg(2+) as a cofactor.

The enzyme catalyses isopentenyl diphosphate + (2E,6E,10E)-geranylgeranyl diphosphate = (2E,6E,10E,14E)-geranylfarnesyl diphosphate + diphosphate. Functionally, probably involved in biosynthesis of the precursor for C25 (sesterterpanyl chain) moiety of C25-C25 diether (2,3-di-O-sesterterpanyl-sn-glycero) membrane lipid. Catalyzes the condensation of isopentenyl pyrophosphate with the allylic pyrophosphates to yield all-trans geranylfarnesyl diphosphate (GFPP). Geranylgeranyl diphosphate (GGPP) is the preferred substrate, however methylallyl diphosphate (DMAPP), farnesyl diphosphate (FPP) and geranyl diphosphate (GPP) can also be used as allylic substrate. This is Geranylfarnesyl diphosphate synthase (fgs) from Aeropyrum pernix.